The following is a 548-amino-acid chain: T-complex protein 1 subunit theta (548 aa).

The segment at 528–548 is disordered; it reads ATGGPKPRGPKQQDEDDDGMA.

Belongs to the TCP-1 chaperonin family. As to quaternary structure, heterooligomeric complex.

The protein localises to the cytoplasm. Molecular chaperone; assists the folding of proteins upon ATP hydrolysis. Known to play a role, in vitro, in the folding of actin and tubulin. Required for correct subcellular localization of pgl-1. The protein is T-complex protein 1 subunit theta of Caenorhabditis briggsae.